The sequence spans 86 residues: Cytochrome c oxidase subunit 6B1 (86 aa).

An N-acetylalanine modification is found at Ala-2. The region spanning 27-73 (TRNCWQNYLDFHRCQKAMTAKGGDISVCEWYQRVYQSLCPTSWVTDW) is the CHCH domain. The Cx9C motif signature appears at 30 to 40 (CWQNYLDFHRC). Disulfide bonds link Cys-30-Cys-65 and Cys-40-Cys-54. Positions 54–65 (CEWYQRVYQSLC) match the Cx10C motif motif.

This sequence belongs to the cytochrome c oxidase subunit 6B family. Component of the cytochrome c oxidase (complex IV, CIV), a multisubunit enzyme composed of 14 subunits. The complex is composed of a catalytic core of 3 subunits MT-CO1, MT-CO2 and MT-CO3, encoded in the mitochondrial DNA, and 11 supernumerary subunits COX4I1 (or COX4I2), COX5A, COX5B, COX6A1 (or COX6A2), COX6B1 (or COX6B2), COX6C, COX7A2 (or COX7A1), COX7B, COX7C, COX8A and NDUFA4, which are encoded in the nuclear genome. The complex exists as a monomer or a dimer and forms supercomplexes (SCs) in the inner mitochondrial membrane with NADH-ubiquinone oxidoreductase (complex I, CI) and ubiquinol-cytochrome c oxidoreductase (cytochrome b-c1 complex, complex III, CIII), resulting in different assemblies (supercomplex SCI(1)III(2)IV(1) and megacomplex MCI(2)III(2)IV(2)).

The protein localises to the mitochondrion inner membrane. It functions in the pathway energy metabolism; oxidative phosphorylation. In terms of biological role, component of the cytochrome c oxidase, the last enzyme in the mitochondrial electron transport chain which drives oxidative phosphorylation. The respiratory chain contains 3 multisubunit complexes succinate dehydrogenase (complex II, CII), ubiquinol-cytochrome c oxidoreductase (cytochrome b-c1 complex, complex III, CIII) and cytochrome c oxidase (complex IV, CIV), that cooperate to transfer electrons derived from NADH and succinate to molecular oxygen, creating an electrochemical gradient over the inner membrane that drives transmembrane transport and the ATP synthase. Cytochrome c oxidase is the component of the respiratory chain that catalyzes the reduction of oxygen to water. Electrons originating from reduced cytochrome c in the intermembrane space (IMS) are transferred via the dinuclear copper A center (CU(A)) of subunit 2 and heme A of subunit 1 to the active site in subunit 1, a binuclear center (BNC) formed by heme A3 and copper B (CU(B)). The BNC reduces molecular oxygen to 2 water molecules using 4 electrons from cytochrome c in the IMS and 4 protons from the mitochondrial matrix. The chain is Cytochrome c oxidase subunit 6B1 (COX6B1) from Homo sapiens (Human).